Reading from the N-terminus, the 291-residue chain is Phosphoribulokinase (291 aa).

12–20 is a binding site for ATP; that stretch reads GSSGAGTTS.

It belongs to the phosphoribulokinase family. Homooctamer.

It catalyses the reaction D-ribulose 5-phosphate + ATP = D-ribulose 1,5-bisphosphate + ADP + H(+). It functions in the pathway carbohydrate biosynthesis; Calvin cycle. This Xanthobacter flavus protein is Phosphoribulokinase (cbbP).